We begin with the raw amino-acid sequence, 187 residues long: Peptidyl-tRNA hydrolase (187 aa).

Residue Tyr15 participates in tRNA binding. Residue His20 is the Proton acceptor of the active site. Positions 64, 66, and 112 each coordinate tRNA.

It belongs to the PTH family. In terms of assembly, monomer.

It is found in the cytoplasm. It catalyses the reaction an N-acyl-L-alpha-aminoacyl-tRNA + H2O = an N-acyl-L-amino acid + a tRNA + H(+). Functionally, hydrolyzes ribosome-free peptidyl-tRNAs (with 1 or more amino acids incorporated), which drop off the ribosome during protein synthesis, or as a result of ribosome stalling. Its function is as follows. Catalyzes the release of premature peptidyl moieties from peptidyl-tRNA molecules trapped in stalled 50S ribosomal subunits, and thus maintains levels of free tRNAs and 50S ribosomes. The polypeptide is Peptidyl-tRNA hydrolase (Parabacteroides distasonis (strain ATCC 8503 / DSM 20701 / CIP 104284 / JCM 5825 / NCTC 11152)).